Consider the following 143-residue polypeptide: 3-hydroxyacyl-[acyl-carrier-protein] dehydratase FabZ (143 aa).

His47 is a catalytic residue.

It belongs to the thioester dehydratase family. FabZ subfamily.

It localises to the cytoplasm. It carries out the reaction a (3R)-hydroxyacyl-[ACP] = a (2E)-enoyl-[ACP] + H2O. Involved in unsaturated fatty acids biosynthesis. Catalyzes the dehydration of short chain beta-hydroxyacyl-ACPs and long chain saturated and unsaturated beta-hydroxyacyl-ACPs. The sequence is that of 3-hydroxyacyl-[acyl-carrier-protein] dehydratase FabZ from Rickettsia canadensis (strain McKiel).